A 286-amino-acid polypeptide reads, in one-letter code: Beta-lactamase SHV-1 (286 aa).

The signal sequence occupies residues 1-21 (MRYIRLCIISLLATLPLAVHA). Residue serine 66 is the Acyl-ester intermediate of the active site. Residues cysteine 73 and cysteine 119 are joined by a disulfide bond. The Proton acceptor role is filled by glutamate 164. 230–232 (KTG) contributes to the substrate binding site.

This sequence belongs to the class-A beta-lactamase family.

The enzyme catalyses a beta-lactam + H2O = a substituted beta-amino acid. This is Beta-lactamase SHV-1 (bla) from Escherichia coli.